The primary structure comprises 686 residues: XK-related protein 5 (686 aa).

A run of 5 helical transmembrane segments spans residues 33 to 53 (LLWG…QALS), 205 to 225 (HFWV…WLVA), 239 to 259 (LFNL…WDSP), 265 to 285 (VTFY…ATDF), and 297 to 317 (IAGV…YYSL). Disordered stretches follow at residues 340-362 (DKTE…ESSG), 444-470 (LQRK…NSSA), and 490-589 (FASD…VGLA). 2 stretches are compositionally biased toward polar residues: residues 455–470 (LPSS…NSSA) and 490–509 (FASD…TQGE). Residues 523–536 (QGKGTGGQQRGGEG) are compositionally biased toward gly residues. A compositionally biased stretch (polar residues) spans 550-567 (VATSSQQEGSPATLQTAH).

The protein belongs to the XK family.

Its subcellular location is the cell membrane. The polypeptide is XK-related protein 5 (Pan troglodytes (Chimpanzee)).